The chain runs to 530 residues: Proline--tRNA ligase, cytoplasmic (530 aa).

Belongs to the class-II aminoacyl-tRNA synthetase family.

It localises to the cytoplasm. The protein resides in the cytosol. The enzyme catalyses tRNA(Pro) + L-proline + ATP = L-prolyl-tRNA(Pro) + AMP + diphosphate. In terms of biological role, catalyzes the attachment of proline to tRNA(Pro) in a two-step reaction: proline is first activated by ATP to form Pro-AMP and then transferred to the acceptor end of tRNA(Pro). This Arabidopsis thaliana (Mouse-ear cress) protein is Proline--tRNA ligase, cytoplasmic.